We begin with the raw amino-acid sequence, 81 residues long: Cytotoxin 1c (81 aa).

The first 21 residues, methionine 1–threonine 21, serve as a signal peptide directing secretion. Intrachain disulfides connect cysteine 24/cysteine 42, cysteine 35/cysteine 59, cysteine 63/cysteine 74, and cysteine 75/cysteine 80.

Belongs to the three-finger toxin family. Short-chain subfamily. Type IA cytotoxin sub-subfamily. In terms of assembly, monomer in solution; Homodimer and oligomer in the presence of negatively charged lipids forming a pore with a size ranging between 20 and 30 Angstroms. Expressed by the venom gland.

The protein localises to the secreted. The protein resides in the target cell membrane. Functionally, shows cytolytic activity on many different cells by forming pore in lipid membranes. In vivo, increases heart rate or kills the animal by cardiac arrest. In addition, it binds to heparin with high affinity, interacts with Kv channel-interacting protein 1 (KCNIP1) in a calcium-independent manner, and binds to integrin alpha-V/beta-3 (ITGAV/ITGB3) with moderate affinity. The protein is Cytotoxin 1c of Naja atra (Chinese cobra).